The chain runs to 251 residues: 3-dehydroquinate dehydratase (251 aa).

3-dehydroquinate is bound by residues 47–49 (EWR) and Arg83. The active-site Proton donor/acceptor is His144. Lys171 functions as the Schiff-base intermediate with substrate in the catalytic mechanism. Residues Arg214, Ser233, and Gln237 each contribute to the 3-dehydroquinate site.

Belongs to the type-I 3-dehydroquinase family. As to quaternary structure, homodimer.

The catalysed reaction is 3-dehydroquinate = 3-dehydroshikimate + H2O. Its pathway is metabolic intermediate biosynthesis; chorismate biosynthesis; chorismate from D-erythrose 4-phosphate and phosphoenolpyruvate: step 3/7. Involved in the third step of the chorismate pathway, which leads to the biosynthesis of aromatic amino acids. Catalyzes the cis-dehydration of 3-dehydroquinate (DHQ) and introduces the first double bond of the aromatic ring to yield 3-dehydroshikimate. The polypeptide is 3-dehydroquinate dehydratase (Klebsiella pneumoniae subsp. pneumoniae (strain ATCC 700721 / MGH 78578)).